A 250-amino-acid chain; its full sequence is Small ribosomal subunit protein uS2 (250 aa).

Belongs to the universal ribosomal protein uS2 family.

In Variovorax paradoxus (strain S110), this protein is Small ribosomal subunit protein uS2.